The sequence spans 660 residues: Potassium voltage-gated channel subfamily KQT member 1 (660 aa).

The span at M1–G18 shows a compositional bias: polar residues. Positions M1 to A67 are disordered. At M1–W113 the chain is on the cytoplasmic side. The span at S53–A67 shows a compositional bias: basic and acidic residues. A helical membrane pass occupies residues K114–M135. The Extracellular segment spans residues S136–N146. The helical transmembrane segment at R147 to W169 threads the bilayer. Residues S170–R185 lie on the Cytoplasmic side of the membrane. Residues F186–N211 traverse the membrane as a helical segment. At G212–A219 the chain is on the extracellular side. The chain crosses the membrane as a helical; Voltage-sensor span at residues I220–D235. The Cytoplasmic segment spans residues R236–Q253. An a 1,2-diacyl-sn-glycero-3-phospho-(1D-myo-inositol-4,5-bisphosphate)-binding site is contributed by Q237. The helical transmembrane segment at E254–A276 threads the bilayer. Topologically, residues E277–Y292 are extracellular. An intramembrane region (pore-forming) is located at residues A293–P313. Over Q314–T315 the chain is Extracellular. The chain crosses the membrane as a helical span at residues W316–G341. Residues S342–L660 are Cytoplasmic-facing. The tract at residues S399–K426 is disordered. Over residues K403–K415 the composition is skewed to basic residues. The stretch at K579 to Q615 forms a coiled coil.

The protein belongs to the potassium channel family. KQT (TC 1.A.1.15) subfamily. Kv7.1/KCNQ1 sub-subfamily. Tetramer. Heterotetramer with KCNE1; targets to the membrane raft. Interacts (via C-terminus) with CALM; forms a heterotetramer in a calcium-independent manner. Interacts with KCNE2; form a heterooligomer complex that targets to the membrane raft and leading to currents with an apparently instantaneous activation, a rapid deactivation process and a linear current-voltage relationship and decreases the amplitude of the outward current. Interacts with KCNE3; four KCNE3 molecules are bound to one KCNQ1 tetramer (4:4 KCNQ1:KCNE3 stoichiometry); alters membrane raft localization; affects KCNQ1 structure and gating properties. Interacts with KCNE4; impairs KCNQ1 localization in lipid rafts and inhibits voltage-gated potassium channel activity. Interacts with KCNE5; impairs KCNQ1 localization in lipid rafts and only conducts current upon strong and continued depolarization. Expressed only in rectal gland and heart. Faintly expressed in intestine. Undetectable in kidney, brain, testis, liver and gills.

Its subcellular location is the cell membrane. It is found in the cytoplasmic vesicle membrane. The protein resides in the membrane raft. The protein localises to the endoplasmic reticulum. It localises to the basolateral cell membrane. The enzyme catalyses K(+)(in) = K(+)(out). Its activity is regulated as follows. PIP2 molecule is essential to activate KCNQ channels by inducing the coupling of the voltage-sensing domain (VSD) and the pore-forming domain (PD). Upon channel activation, PIP2 disrupts the VSD-calmodulin/CALM interactions, causing the release of CALM from the VSD which triggers the opening of the gate. Calcium potentiates KCNQ1 channel current through calcium-bound CALM. Calcium-bound CALM competes with PIP2 to stabilize the channel open state. In terms of biological role, pore-forming subunit of the voltage-gated potassium (Kv) channel involved in the regulation of cardiomyocyte excitability and important in normal development and functions of myocardium, inner ear, stomach and colon. Associates with KCNE beta subunits that modulates current kinetics. Induces a voltage-dependent by rapidly activating and slowly deactivating potassium-selective outward current. Also promotes a delayed voltage activated potassium current showing outward rectification characteristic. During beta-adrenergic receptor stimulation participates in cardiac repolarization by associating with KCNE1 to form the I(Ks) cardiac potassium current that increases the amplitude and slows down the activation kinetics of outward potassium current I(Ks). When associated with KCNE3, forms the potassium channel that is important for cyclic AMP-stimulated intestinal secretion of chloride ions. When associated with KCNE2, forms a heterooligomer complex leading to currents with an apparently instantaneous activation, a rapid deactivation process and a linear current-voltage relationship and decreases the amplitude of the outward current. When associated with KCNE4, inhibits voltage-gated potassium channel activity. When associated with KCNE5, this complex only conducts current upon strong and continued depolarization. This chain is Potassium voltage-gated channel subfamily KQT member 1, found in Squalus acanthias (Spiny dogfish).